Here is a 228-residue protein sequence, read N- to C-terminus: uncharacterized protein (228 aa).

4 helical membrane-spanning segments follow: residues 37 to 54, 67 to 89, 104 to 126, and 138 to 160; these read WCMHASLTLVLLALTLIV, VVSIYLAFFFSLKILHTFFSTGV, HIGIRLFLLLCASSLFYACTSRL, and VLHVRSTAYTTPCAVYVMMLVLY.

The protein resides in the cell membrane. This is an uncharacterized protein from Treponema pallidum (strain Nichols).